The sequence spans 574 residues: Putative thiamine pyrophosphate-containing protein YdaP (574 aa).

A coiled-coil region spans residues 28 to 55 (DSINEFIEELRHERNQLKFIQTRHEEVA). Glu-52 contributes to the thiamine diphosphate binding site. Residues 256-277 (IGTK…LGTS) and 294-313 (DSDP…LVCD) each bind FAD. Residues 384–464 (TVTVWMARHF…ITVVILNNEN (81 aa)) form a thiamine pyrophosphate binding region. Mg(2+) contacts are provided by Asp-435 and Asn-462.

This sequence belongs to the TPP enzyme family. Requires Mg(2+) as cofactor. It depends on thiamine diphosphate as a cofactor.

This Bacillus subtilis (strain 168) protein is Putative thiamine pyrophosphate-containing protein YdaP (ydaP).